We begin with the raw amino-acid sequence, 477 residues long: UDP-N-acetylmuramate--L-alanine ligase (477 aa).

Residue 122-128 (GTHGKTT) participates in ATP binding.

It belongs to the MurCDEF family.

It localises to the cytoplasm. The catalysed reaction is UDP-N-acetyl-alpha-D-muramate + L-alanine + ATP = UDP-N-acetyl-alpha-D-muramoyl-L-alanine + ADP + phosphate + H(+). It functions in the pathway cell wall biogenesis; peptidoglycan biosynthesis. In terms of biological role, cell wall formation. The polypeptide is UDP-N-acetylmuramate--L-alanine ligase (Xylella fastidiosa (strain 9a5c)).